We begin with the raw amino-acid sequence, 150 residues long: Putative esterase VC_A0580 (150 aa).

Belongs to the thioesterase PaaI family.

The sequence is that of Putative esterase VC_A0580 from Vibrio cholerae serotype O1 (strain ATCC 39315 / El Tor Inaba N16961).